The following is a 248-amino-acid chain: Transcription factor Spi-C (248 aa).

Residues 111 to 194 (LRLFEYLHES…IRRKLTYQFS (84 aa)) constitute a DNA-binding region (ETS).

It belongs to the ETS family. Binds DNA as a monomer.

It localises to the nucleus. Its function is as follows. Controls the development of red pulp macrophages required for red blood cells recycling and iron homeostasis. Transcription factor that binds to the PU-box, a purine-rich DNA sequence (5'-GAGGA[AT]-3') that can act as a lymphoid-specific enhancer. Regulates VCAM1 gene expression. The sequence is that of Transcription factor Spi-C (SPIC) from Bos taurus (Bovine).